Here is a 352-residue protein sequence, read N- to C-terminus: Ion-translocating oxidoreductase complex subunit D (352 aa).

Helical transmembrane passes span Ile20–Gly40, Gly42–Leu62, Ile89–Ala109, and Pro123–Leu143. Thr187 carries the FMN phosphoryl threonine modification. 5 helical membrane-spanning segments follow: residues Ile214–Leu234, Trp242–Phe262, Leu267–Leu287, Leu301–Pro321, and Asp322–Thr342.

Belongs to the NqrB/RnfD family. As to quaternary structure, the complex is composed of six subunits: RsxA, RsxB, RsxC, RsxD, RsxE and RsxG. It depends on FMN as a cofactor.

The protein localises to the cell inner membrane. Part of a membrane-bound complex that couples electron transfer with translocation of ions across the membrane. Required to maintain the reduced state of SoxR. This Escherichia coli (strain ATCC 8739 / DSM 1576 / NBRC 3972 / NCIMB 8545 / WDCM 00012 / Crooks) protein is Ion-translocating oxidoreductase complex subunit D.